The primary structure comprises 153 residues: Superoxide dismutase [Cu-Zn] (153 aa).

Residues His-46, His-48, and His-63 each coordinate Cu cation. Cys-57 and Cys-146 are disulfide-bonded. Zn(2+) is bound by residues His-63, His-71, His-80, and Asp-83. Cu cation is bound at residue His-120.

The protein belongs to the Cu-Zn superoxide dismutase family. As to quaternary structure, homodimer. Requires Cu cation as cofactor. Zn(2+) serves as cofactor.

The protein localises to the cytoplasm. It catalyses the reaction 2 superoxide + 2 H(+) = H2O2 + O2. Functionally, destroys radicals which are normally produced within the cells and which are toxic to biological systems. The sequence is that of Superoxide dismutase [Cu-Zn] (SODCC) from Solidago canadensis var. scabra (Tall goldenrod).